Reading from the N-terminus, the 332-residue chain is Phospho-N-acetylmuramoyl-pentapeptide-transferase (332 aa).

The next 10 membrane-spanning stretches (helical) occupy residues 3–23, 52–72, 74–94, 115–135, 140–160, 172–192, 197–217, 223–243, 248–268, and 311–331; these read FALM…PRFI, MGGT…ATAF, LLTG…VVGF, LALQ…GAGG, VFGH…FWLV, IDGL…VIAF, FDIL…FVYN, IFMG…ISIA, WTLL…MLQV, and VDFF…AILY.

Belongs to the glycosyltransferase 4 family. MraY subfamily. Requires Mg(2+) as cofactor.

The protein localises to the cell membrane. It catalyses the reaction UDP-N-acetyl-alpha-D-muramoyl-L-alanyl-gamma-D-glutamyl-L-lysyl-D-alanyl-D-alanine + di-trans,octa-cis-undecaprenyl phosphate = Mur2Ac(oyl-L-Ala-gamma-D-Glu-L-Lys-D-Ala-D-Ala)-di-trans,octa-cis-undecaprenyl diphosphate + UMP. It participates in cell wall biogenesis; peptidoglycan biosynthesis. Functionally, catalyzes the initial step of the lipid cycle reactions in the biosynthesis of the cell wall peptidoglycan: transfers peptidoglycan precursor phospho-MurNAc-pentapeptide from UDP-MurNAc-pentapeptide onto the lipid carrier undecaprenyl phosphate, yielding undecaprenyl-pyrophosphoryl-MurNAc-pentapeptide, known as lipid I. This is Phospho-N-acetylmuramoyl-pentapeptide-transferase from Streptococcus suis (strain 98HAH33).